Here is a 249-residue protein sequence, read N- to C-terminus: tRNA (guanine-N(1)-)-methyltransferase (249 aa).

Residues G113 and 133-138 (IGDFVL) contribute to the S-adenosyl-L-methionine site.

Belongs to the RNA methyltransferase TrmD family. In terms of assembly, homodimer.

The protein localises to the cytoplasm. The catalysed reaction is guanosine(37) in tRNA + S-adenosyl-L-methionine = N(1)-methylguanosine(37) in tRNA + S-adenosyl-L-homocysteine + H(+). Functionally, specifically methylates guanosine-37 in various tRNAs. The sequence is that of tRNA (guanine-N(1)-)-methyltransferase from Aliivibrio fischeri (strain ATCC 700601 / ES114) (Vibrio fischeri).